A 522-amino-acid polypeptide reads, in one-letter code: Poly(A) polymerase (522 aa).

ATP contacts are provided by residues 63–65 (YGS), 76–78 (DID), aspartate 130, lysine 193, tyrosine 202, and 211–212 (GI). Mg(2+) is bound by residues aspartate 76, aspartate 78, and aspartate 130. Residues 475–522 (QLKAKEENSIPNEEKKEQLKKEMKQEANTIVKNSSTDDDFMKRFTRKN) form a disordered region. Residues 476 to 499 (LKAKEENSIPNEEKKEQLKKEMKQ) show a composition bias toward basic and acidic residues.

It belongs to the poly(A) polymerase family. Mg(2+) is required as a cofactor. Requires Mn(2+) as cofactor.

The protein resides in the cytoplasm. It localises to the nucleus. It catalyses the reaction RNA(n) + ATP = RNA(n)-3'-adenine ribonucleotide + diphosphate. In terms of biological role, polymerase that creates the 3'-poly(A) tail of mRNA's. May acquire specificity through interaction with a cleavage and polyadenylation factor. This is Poly(A) polymerase from Entamoeba histolytica (strain ATCC 30459 / HM-1:IMSS / ABRM).